The chain runs to 64 residues: QSTGGKAPECLLSNYCNNECTKVHYADKGYCCLLSCYCFGLSDDKKVLEISDSRKKYCDYTIIN.

The LCN-type CS-alpha/beta domain maps to 1-59 (QSTGGKAPECLLSNYCNNECTKVHYADKGYCCLLSCYCFGLSDDKKVLEISDSRKKYCD). Intrachain disulfides connect C10/C31, C16/C36, C20/C38, and C32/C58.

This sequence belongs to the long (4 C-C) scorpion toxin superfamily. Sodium channel inhibitor family. Beta subfamily. Expressed by the venom gland.

The protein localises to the secreted. Functionally, excitatory insect beta-toxins induce a spastic paralysis. They bind voltage-independently at site-4 of sodium channels (Nav) and shift the voltage of activation toward more negative potentials thereby affecting sodium channel activation and promoting spontaneous and repetitive firing. In vivo, this recombinant protein is lethal to Locusta migratoria larvae after injection, but has no significant effect when orally administered. Is not toxic to mice after intracerebroventricular injection. In Odontobuthus doriae (Yellow Iranian scorpion), this protein is Beta-insect excitatory toxin OdTx12.